The following is a 91-amino-acid chain: Putative defensin-like protein 221 (91 aa).

An N-terminal signal peptide occupies residues 1-19 (MKTLFFFLTIAVLVSSCTS). 3 cysteine pairs are disulfide-bonded: C61–C78, C64–C83, and C68–C85.

Belongs to the DEFL family.

The protein resides in the secreted. This Arabidopsis thaliana (Mouse-ear cress) protein is Putative defensin-like protein 221.